We begin with the raw amino-acid sequence, 520 residues long: Glutamate decarboxylase-like protein FG08083 (520 aa).

Residue 86–88 participates in substrate binding; the sequence is KLV. An N6-(pyridoxal phosphate)lysine modification is found at Lys-300. The disordered stretch occupies residues 338–357; the sequence is KNGVSSEQSANTNGSEKESW. Residues 340-351 are compositionally biased toward polar residues; it reads GVSSEQSANTNG. Position 492 (Arg-492) interacts with substrate.

Belongs to the group II decarboxylase family. It depends on pyridoxal 5'-phosphate as a cofactor.

Its pathway is mycotoxin biosynthesis. Functionally, glutamate decarboxylase-like protein; part of the gene cluster that mediates the biosynthesis of butenolide, a mycotoxin that shows antibiotic activity but does not seem to play a major role in the spread of head blight in wheat. Butenolide is derived from glutamic acid via a 4-acetamido-2-butenoic acid intermediate. The predicted function of the NADH:flavin oxidoreductase FG08077, the cytochrome P450 monooxygenase FG08079, the decarboxylase FG08083, and the putative acetyltransferase FG08082 are consistent with this pathway, however, the respective activities of the butelonide biosynthesis cluster enzymes have still to be experimentally determined. The chain is Glutamate decarboxylase-like protein FG08083 from Gibberella zeae (strain ATCC MYA-4620 / CBS 123657 / FGSC 9075 / NRRL 31084 / PH-1) (Wheat head blight fungus).